The following is a 1040-amino-acid chain: Multidrug resistance protein MdtB (1040 aa).

11 helical membrane passes run 15–37 (LFIL…GIIG), 343–365 (VQFE…LRNA), 369–391 (LIPS…FLGF), 398–420 (LMAL…ENIA), 440–462 (IGFT…LFMG), 474–496 (VTLA…MMCA), 535–557 (HPWL…YIWI), 867–889 (VWLI…ESFI), 909–931 (LMMA…IGIV), 968–990 (ILMT…GVGA), and 1000–1022 (MVGG…YLLF).

This sequence belongs to the resistance-nodulation-cell division (RND) (TC 2.A.6) family. MdtB subfamily. Part of a tripartite efflux system composed of MdtA, MdtB and MdtC. MdtB forms a heteromultimer with MdtC.

It localises to the cell inner membrane. The chain is Multidrug resistance protein MdtB from Pectobacterium atrosepticum (strain SCRI 1043 / ATCC BAA-672) (Erwinia carotovora subsp. atroseptica).